The primary structure comprises 217 residues: Ras-related protein RABA1f (217 aa).

20 to 27 (GDSGVGKS) contacts GTP. The Effector region motif lies at 42–50 (SKSTIGVEF). GTP contacts are provided by residues 68 to 72 (DTAGQ), 126 to 129 (NKAD), and 156 to 157 (SA). Residues Cys-214 and Cys-215 are each lipidated (S-geranylgeranyl cysteine).

It belongs to the small GTPase superfamily. Rab family.

The protein localises to the cell membrane. In terms of biological role, intracellular vesicle trafficking and protein transport. This chain is Ras-related protein RABA1f (RABA1F), found in Arabidopsis thaliana (Mouse-ear cress).